A 477-amino-acid chain; its full sequence is Asparaginyl-tRNA synthetase (477 aa).

The transit peptide at 1–14 (MLGARRLLGALRLC) directs the protein to the mitochondrion. The residue at position 353 (K353) is an N6-acetyllysine.

This sequence belongs to the class-II aminoacyl-tRNA synthetase family. As to quaternary structure, homodimer. As to expression, expressed in brain and inner ear, including the cochlear epithelium and organ of Corti.

The protein localises to the mitochondrion matrix. It localises to the mitochondrion. The enzyme catalyses tRNA(Asn) + L-asparagine + ATP = L-asparaginyl-tRNA(Asn) + AMP + diphosphate + H(+). Mitochondrial aminoacyl-tRNA synthetase that catalyzes the specific attachment of the asparagine amino acid (aa) to the homologous transfer RNA (tRNA), further participating in protein synthesis. The reaction occurs in a two steps: asparagine is first activated by ATP to form Asn-AMP and then transferred to the acceptor end of tRNA(Asn). This is Asparaginyl-tRNA synthetase from Mus musculus (Mouse).